Here is a 387-residue protein sequence, read N- to C-terminus: Alkanesulfonate monooxygenase (387 aa).

The protein belongs to the SsuD family.

It carries out the reaction an alkanesulfonate + FMNH2 + O2 = an aldehyde + FMN + sulfite + H2O + 2 H(+). Catalyzes the desulfonation of aliphatic sulfonates. The protein is Alkanesulfonate monooxygenase of Cupriavidus necator (strain ATCC 17699 / DSM 428 / KCTC 22496 / NCIMB 10442 / H16 / Stanier 337) (Ralstonia eutropha).